A 275-amino-acid chain; its full sequence is Ribosomal RNA small subunit methyltransferase A (275 aa).

6 residues coordinate S-adenosyl-L-methionine: N19, L21, G46, E71, D94, and N117.

It belongs to the class I-like SAM-binding methyltransferase superfamily. rRNA adenine N(6)-methyltransferase family. RsmA subfamily.

The protein localises to the cytoplasm. It carries out the reaction adenosine(1518)/adenosine(1519) in 16S rRNA + 4 S-adenosyl-L-methionine = N(6)-dimethyladenosine(1518)/N(6)-dimethyladenosine(1519) in 16S rRNA + 4 S-adenosyl-L-homocysteine + 4 H(+). In terms of biological role, specifically dimethylates two adjacent adenosines (A1518 and A1519) in the loop of a conserved hairpin near the 3'-end of 16S rRNA in the 30S particle. May play a critical role in biogenesis of 30S subunits. In Burkholderia multivorans (strain ATCC 17616 / 249), this protein is Ribosomal RNA small subunit methyltransferase A.